Reading from the N-terminus, the 207-residue chain is Nuclear transcription factor Y subunit beta (207 aa).

Residues 1 to 52 (MTMDGDSSTTDASQLGISADYIGGSHYVIQPHDDTEDSMNDHEDTNGSKESF) form an a domain region. The tract at residues 27–52 (YVIQPHDDTEDSMNDHEDTNGSKESF) is disordered. The span at 39–52 (MNDHEDTNGSKESF) shows a compositional bias: basic and acidic residues. Residues 53–142 (REQDIYLPIA…PLKLYLQKFR (90 aa)) are b domain. A DNA-binding region spans residues 59–65 (LPIANVA). Positions 86–97 (VQECVSEFISFI) are subunit association domain (SAD). Residue lysine 140 forms a Glycyl lysine isopeptide (Lys-Gly) (interchain with G-Cter in ubiquitin) linkage. The segment at 143-207 (EAMKGEKGIG…ISGVQQIQFS (65 aa)) is c domain.

It belongs to the NFYB/HAP3 subunit family. Heterotrimeric transcription factor composed of three components, NF-YA, NF-YB and NF-YC. NF-YB and NF-YC must interact and dimerize for NF-YA association and DNA binding. Interacts with C1QBP. Monoubiquitination at Lys-140 plays an important role in transcriptional activation by allowing the deposition of histone H3 methylations as well as histone H2B monoubiquitination at 'Lys-121'.

The protein localises to the nucleus. Functionally, component of the sequence-specific heterotrimeric transcription factor (NF-Y) which specifically recognizes a 5'-CCAAT-3' box motif found in the promoters of its target genes. NF-Y can function as both an activator and a repressor, depending on its interacting cofactors. The polypeptide is Nuclear transcription factor Y subunit beta (NFYB) (Homo sapiens (Human)).